The primary structure comprises 390 residues: Cyclic amide hydrolase (390 aa).

The interval 1–118 is RU A; sequence MPNPEASLSP…TVVTQEWVAD (118 aa). Substrate is bound by residues Arg-66 and 97–98; that span reads SG. The tract at residues 127–268 is RU B; it reads GLVVGRGHTE…GEVLLLANSA (142 aa). Lys-177 is a catalytic residue. Residues Asn-213, 251–252, Lys-346, and 365–366 contribute to the substrate site; these read SS and SG. Ser-251 acts as the Nucleophile in catalysis. An RU C region spans residues 274–390; the sequence is LRIGHGITRD…VAAVVRRLPA (117 aa).

Belongs to the cyclic amide hydrolase (CyAH) family. Homotetramer; disulfide-linked. The disulfide forms between 2 monomers in the tetramer, such that each tetramer contains 2 sets of vicinal disulfides.

Functionally, cyclic amide hydrolase of unknown substrate specificity. Catalyzes the hydrolytic ring-opening of a cyclic amide. Does not act on cyanuric acid nor barbituric acid. This chain is Cyclic amide hydrolase, found in Pseudofrankia inefficax (strain DSM 45817 / CECT 9037 / DDB 130130 / EuI1c) (Frankia inefficax).